Reading from the N-terminus, the 459-residue chain is Septin-4 (459 aa).

Residues S10, S49, S98, and S99 each carry the phosphoserine modification. Disordered regions lie at residues 18–52 (FVKDFPGSEPCHPTESKTRVARPQILEPRPQSPDL) and 70–98 (SQQYFCPPAPLSPSSRPRSPWGKLDPYDS). Positions 122–395 (KGFDFTLMVA…ENYRAQCIQS (274 aa)) constitute a Septin-type G domain. Residues 132–139 (GESGLGKS) form a G1 motif region. Residues 132-139 (GESGLGKS) and T166 contribute to the GTP site. The interval 189-192 (DTPG) is G3 motif. The interval 270–273 (AKAD) is G4 motif. Position 271-279 (271-279 (KADTLTPSE)) interacts with GTP. S306 carries the phosphoserine modification. GTP contacts are provided by G329 and R344. The interval 410-430 (TRESGTDFPIPAVPPGTDPET) is disordered. The residue at position 413 (S413) is a Phosphoserine. At T415 the chain carries Phosphothreonine. Residues 434-459 (IREKDEELRRMQEMLHKIQRQMKETH) are a coiled coil.

Belongs to the TRAFAC class TrmE-Era-EngA-EngB-Septin-like GTPase superfamily. Septin GTPase family. Septins polymerize into heterooligomeric protein complexes that form filaments, and can associate with cellular membranes, actin filaments and microtubules. GTPase activity is required for filament formation. Interacts with SEPTIN8. Component of a septin core octameric complex consisting of SEPTIN12, SEPTIN7, SEPTIN6 and SEPTIN2 or SEPTIN4 in the order 12-7-6-2-2-6-7-12 or 12-7-6-4-4-6-7-12. Interacts with SEPTIN14 (via C-terminus). Interacts with DYRK1A. Interacts with SLC6A3/DAT and SNCA/alpha-synuclein. Interacts with STX1A; in the striatum. Interacts with XIAP (via BIR3 domain) following the induction of apoptosis. Interacts with AREL1 (via HECT domain); in the cytoplasm following induction of apoptosis. Post-translationally, phosphorylated by DYRK1A.

Its subcellular location is the cytoplasm. It localises to the cell projection. The protein resides in the cilium. It is found in the flagellum. The protein localises to the cytoplasmic vesicle. Its subcellular location is the secretory vesicle. It localises to the axon. The protein resides in the dendrite. It is found in the perikaryon. Its function is as follows. Filament-forming cytoskeletal GTPase. Pro-apoptotic protein involved in LGR5-positive intestinal stem cell and Paneth cell expansion in the intestines, via its interaction with XIAP. May also play a role in the regulation of cell fate in the intestine. Positive regulator of apoptosis involved in hematopoietic stem cell homeostasis; via its interaction with XIAP. Negative regulator of repair and hair follicle regeneration in response to injury, due to inhibition of hair follicle stem cell proliferation, potentially via its interaction with XIAP. Plays an important role in male fertility and sperm motility. During spermiogenesis, essential for the establishment of the annulus (a fibrous ring structure connecting the midpiece and the principal piece of the sperm flagellum) which is a requisite for the structural and mechanical integrity of the sperm. Involved in the migration of cortical neurons and the formation of neuron leading processes during embryonic development. Required for dopaminergic metabolism in presynaptic autoreceptors; potentially via activity as a presynaptic scaffold protein. The chain is Septin-4 from Rattus norvegicus (Rat).